A 202-amino-acid polypeptide reads, in one-letter code: Ig delta chain C region (202 aa).

Residues 32-58 (KSKTFKLPETRNSQSSKKANPTPQAKN) are disordered. Polar residues predominate over residues 41 to 56 (TRNSQSSKKANPTPQA). The region spanning 66–178 (PTATKNIVGA…TKLNASKSLE (113 aa)) is the Ig-like domain.

The polypeptide is Ig delta chain C region (Rattus norvegicus (Rat)).